A 301-amino-acid polypeptide reads, in one-letter code: Ribonuclease HIII (301 aa).

The RNase H type-2 domain occupies 84–301 (ASAIGSDEVG…TEKAARIAKK (218 aa)). Residues Asp-90, Glu-91, and Asp-195 each coordinate a divalent metal cation.

It belongs to the RNase HII family. RnhC subfamily. It depends on Mn(2+) as a cofactor. Requires Mg(2+) as cofactor.

The protein localises to the cytoplasm. The enzyme catalyses Endonucleolytic cleavage to 5'-phosphomonoester.. In terms of biological role, endonuclease that specifically degrades the RNA of RNA-DNA hybrids. The sequence is that of Ribonuclease HIII from Geobacillus sp. (strain WCH70).